A 188-amino-acid polypeptide reads, in one-letter code: ATP synthase subunit b (188 aa).

A helical membrane pass occupies residues 30 to 50 (IVWSLIPFLIILIVFWKLVLP).

Belongs to the ATPase B chain family. F-type ATPases have 2 components, F(1) - the catalytic core - and F(0) - the membrane proton channel. F(1) has five subunits: alpha(3), beta(3), gamma(1), delta(1), epsilon(1). F(0) has three main subunits: a(1), b(2) and c(10-14). The alpha and beta chains form an alternating ring which encloses part of the gamma chain. F(1) is attached to F(0) by a central stalk formed by the gamma and epsilon chains, while a peripheral stalk is formed by the delta and b chains.

The protein localises to the cell membrane. In terms of biological role, f(1)F(0) ATP synthase produces ATP from ADP in the presence of a proton or sodium gradient. F-type ATPases consist of two structural domains, F(1) containing the extramembraneous catalytic core and F(0) containing the membrane proton channel, linked together by a central stalk and a peripheral stalk. During catalysis, ATP synthesis in the catalytic domain of F(1) is coupled via a rotary mechanism of the central stalk subunits to proton translocation. Functionally, component of the F(0) channel, it forms part of the peripheral stalk, linking F(1) to F(0). The polypeptide is ATP synthase subunit b (Corynebacterium glutamicum (strain R)).